We begin with the raw amino-acid sequence, 676 residues long: SPARC-like protein 1 (676 aa).

An N-terminal signal peptide occupies residues 1–16 (MKTVLLLICLLGSAFT). Basic and acidic residues predominate over residues 35 to 44 (EKHKYTHSEM). Disordered regions lie at residues 35–151 (EKHK…WALR), 173–369 (NTVG…GVYR), and 385–437 (SEDN…RNST). A compositionally biased stretch (polar residues) spans 95–108 (KNSLRSINFLTLHS). N-linked (GlcNAc...) asparagine glycosylation occurs at Asn182. Positions 184 to 202 (SEEEEAGEEEDEEWGEETD) are enriched in acidic residues. Basic and acidic residues-rich tracts occupy residues 249–266 (EKFS…KEGK) and 273–291 (NHNE…KEHF). Residues 312 to 328 (NAEEDDNDSGDDGEEDL) show a composition bias toward acidic residues. Asn318 is a glycosylation site (N-linked (GlcNAc...) asparagine). Positions 385–394 (SEDNHYHHEP) are enriched in basic and acidic residues. Residue Asn396 is glycosylated (N-linked (GlcNAc...) asparagine). The span at 397 to 408 (SSSKQQLQTSSS) shows a compositional bias: low complexity. Asn413 is a glycosylation site (N-linked (GlcNAc...) asparagine). Over residues 415-433 (TEHEDEVKTTGGSYHEESA) the composition is skewed to basic and acidic residues. An N-linked (GlcNAc...) asparagine glycan is attached at Asn435. The Follistatin-like domain occupies 444–466 (LCRNFHCKRGKVCQADKQGKPSC). 7 disulfides stabilise this stretch: Cys445/Cys456, Cys450/Cys466, Cys468/Cys502, Cys474/Cys495, Cys484/Cys521, Cys527/Cys638, and Cys646/Cys662. A Kazal-like domain is found at 462–523 (GKPSCICQDP…HLDYMGACKH (62 aa)). Asn488 is a glycosylation site (N-linked (GlcNAc...) asparagine). Residues 634 to 669 (PMEHCITRFFQECDGDQDKLITLKEWCHCFAIKEED) form the EF-hand domain. The Ca(2+) site is built by Asp647, Asp649, Asp651, and Glu658.

The protein belongs to the SPARC family. Glial (Mueller) cells of the neuroretina.

The protein resides in the secreted. The protein localises to the extracellular space. It is found in the extracellular matrix. Could play a role in the late stage of neuroretina morphogenesis. In Coturnix japonica (Japanese quail), this protein is SPARC-like protein 1 (SPARCL1).